The following is a 213-amino-acid chain: Probable nicotinate-nucleotide adenylyltransferase (213 aa).

Belongs to the NadD family.

It carries out the reaction nicotinate beta-D-ribonucleotide + ATP + H(+) = deamido-NAD(+) + diphosphate. The protein operates within cofactor biosynthesis; NAD(+) biosynthesis; deamido-NAD(+) from nicotinate D-ribonucleotide: step 1/1. Its function is as follows. Catalyzes the reversible adenylation of nicotinate mononucleotide (NaMN) to nicotinic acid adenine dinucleotide (NaAD). This Shigella boydii serotype 18 (strain CDC 3083-94 / BS512) protein is Probable nicotinate-nucleotide adenylyltransferase.